The sequence spans 809 residues: MSEQRSDEPEVVDAIIEDQQGAQATTDATPPVRIENSLPTELVIYPLGGRPFFPGMLTPIQVEGSPYYETIKKAMDSHGRLFGILASHAEDGQEVFDANQLFGIGTVVRILEASVNEEAKQIKLLAEGLWRFEVRDVVSVGPPIVAQVTHHNNPVSVVDTDALKPYTMAVINTLKEILKYDSLYQEQVKMFLSRHNFSEPDRLADFVASMTSSSREELQEVLETLPIMARLEKVLTLLKKELEVVKLQNKIQRQVEEGIAEHQRQFFLREQLKEIQKELGITKDDRTAEIDRFRERLEKLTLSEEAEQKIEEELDKLAILETGSSEYGVTRNYVDWLTSLPWGVHSTDKLNIARARRILDRDHDGLEDVKERILEFLAVGKLKGEIGGSIILLVGPPGVGKTSIGRSVATAVGREFYRFSVGGMRDEAEIKGHRRTYVGAMPGKFVQAIKHTKVANPLIMLDEVDKIGASYQGDPASALLEVLDPEQNSEFLDHYMDVRFDLSKVLFICTANQLDTIPRPLLDRMEVIRLSGYITSEKVRIARNHLLPKQLEKNGLDKSQLRVSNGALREIIEGYAREAGVRRLEQKIGAIARKVAVKVLEEAELPISVGQNDLDSYLGKPDFREEKPLTGVGIVTGLAWTALGGATLDIESAQTSTEGNTLLLTGQLGDVMKESARIAFSFLQSNVEKLGGKSERLKGNIHLHVPEGATPKDGPSAGITIATALLSLARTQPLPRRLAMTGEITLTGSVLAVGGVREKVIAARRVGIRELIIPEACRKDYDEVPEHIREGFTVHFVKKYAEVAKLVFG.

Residues 42–242 form the Lon N-terminal domain; the sequence is LVIYPLGGRP…KVLTLLKKEL (201 aa). Residue 395–402 participates in ATP binding; sequence GPPGVGKT. A Lon proteolytic domain is found at 629-809; the sequence is LTGVGIVTGL…YAEVAKLVFG (181 aa). Residues Ser-716 and Lys-759 contribute to the active site.

This sequence belongs to the peptidase S16 family. In terms of assembly, homohexamer. Organized in a ring with a central cavity.

The protein resides in the cytoplasm. It carries out the reaction Hydrolysis of proteins in presence of ATP.. In terms of biological role, ATP-dependent serine protease that mediates the selective degradation of mutant and abnormal proteins as well as certain short-lived regulatory proteins. Required for cellular homeostasis and for survival from DNA damage and developmental changes induced by stress. Degrades polypeptides processively to yield small peptide fragments that are 5 to 10 amino acids long. Binds to DNA in a double-stranded, site-specific manner. The chain is Lon protease from Magnetococcus marinus (strain ATCC BAA-1437 / JCM 17883 / MC-1).